A 188-amino-acid chain; its full sequence is dCTP deaminase (188 aa).

Residues 111–116, 135–137, Gln-156, Tyr-170, and Gln-180 contribute to the dCTP site; these read KSTYAR and TLE. Glu-137 functions as the Proton donor/acceptor in the catalytic mechanism.

It belongs to the dCTP deaminase family. As to quaternary structure, homotrimer.

It catalyses the reaction dCTP + H2O + H(+) = dUTP + NH4(+). Its pathway is pyrimidine metabolism; dUMP biosynthesis; dUMP from dCTP (dUTP route): step 1/2. Functionally, catalyzes the deamination of dCTP to dUTP. The polypeptide is dCTP deaminase (Azotobacter vinelandii (strain DJ / ATCC BAA-1303)).